The chain runs to 345 residues: Phosphoribosylformylglycinamidine cyclo-ligase (345 aa).

This sequence belongs to the AIR synthase family.

It localises to the cytoplasm. It catalyses the reaction 2-formamido-N(1)-(5-O-phospho-beta-D-ribosyl)acetamidine + ATP = 5-amino-1-(5-phospho-beta-D-ribosyl)imidazole + ADP + phosphate + H(+). The protein operates within purine metabolism; IMP biosynthesis via de novo pathway; 5-amino-1-(5-phospho-D-ribosyl)imidazole from N(2)-formyl-N(1)-(5-phospho-D-ribosyl)glycinamide: step 2/2. The chain is Phosphoribosylformylglycinamidine cyclo-ligase from Mannheimia succiniciproducens (strain KCTC 0769BP / MBEL55E).